Here is a 387-residue protein sequence, read N- to C-terminus: MSVIKMTDLDLAGKRVLIRADLNVPVKDGKVTSDARIVATLPTIKLALEKGAKLMITSHLGRPTEGEYNEEFSLAPVVNYLKDALSCPVRLAKDYLDGVEVAAGELVVLENCRFNKGEKKNTEELAKKYAALCDVFVMDAFGTAHRAEGSTYGVAQFAPVACAGPLLAGELEALGKAMLKPERPMVAIVGGSKVSTKLTVLESLSKIADQLVVGGGIANTFIAAAGHNVGKSLCEHDLIDTAKKLAAETNIPVTTDVVVGAEFSESTPATIKSVADVTDGDMIFDIGPDSAKALADIIMNAKTILWNGPVGVFEFDQFAEGTKVIAEAIAASPAFSIAGGGDTLAAIDKFGIADKVSYISTGGGAFLEFVEGKVLPAVAILEQRAKA.

Substrate contacts are provided by residues 21-23, R36, 59-62, R113, and R146; these read DLN and HLGR. Residues K197, E314, and 340–343 each bind ATP; that span reads GGDT.

Belongs to the phosphoglycerate kinase family. In terms of assembly, monomer.

Its subcellular location is the cytoplasm. The enzyme catalyses (2R)-3-phosphoglycerate + ATP = (2R)-3-phospho-glyceroyl phosphate + ADP. The protein operates within carbohydrate degradation; glycolysis; pyruvate from D-glyceraldehyde 3-phosphate: step 2/5. The polypeptide is Phosphoglycerate kinase (Aeromonas hydrophila subsp. hydrophila (strain ATCC 7966 / DSM 30187 / BCRC 13018 / CCUG 14551 / JCM 1027 / KCTC 2358 / NCIMB 9240 / NCTC 8049)).